Here is a 514-residue protein sequence, read N- to C-terminus: Vacuolar aminopeptidase 1 (514 aa).

The propeptide at 1–45 is required for vacuolar localization. Mediates aggregation and vesicle formation in Cvt pathway; it reads MEEQREILEQLKKTLQMLTVEPSKNNQIANEEKEKKENENSWCIL. Residues asparagine 107 and asparagine 110 are each glycosylated (N-linked (GlcNAc...) asparagine). Histidine 132 contributes to the Zn(2+) binding site. Histidine 210 is a substrate binding site. The Zn(2+) site is built by aspartate 303, glutamate 339, and glutamate 340. Glutamate 339 contacts substrate. At serine 356 the chain carries Phosphoserine. Aspartate 385 contacts Zn(2+). Residues aspartate 385 and histidine 388 each coordinate substrate. Residue asparagine 448 is glycosylated (N-linked (GlcNAc...) asparagine). Histidine 479 contacts Zn(2+).

It belongs to the peptidase M18 family. In terms of assembly, homododecamer. The precursor form of aminopeptidase 1 (prApe1) assembles into dodecamers and further aggregates into higher multimers (the Ape1 complex) in the cytoplasm. The Ape1 complex is disaggregated in the vacuolar lumen, but mature aminopeptidase 1 (mApe1) retains its dodecameric form. Dodecamer assembly in the cytoplasm is essential for formation of an enzymatically active complex. If cytoplasmic homododecamerization of prApe1 is disturbed in mutants, homododecamers of mApe1 will form in the vacuole, but they are enzymatically inactive. Interacts with ATG19. The cofactor is Zn(2+). Synthesized in a precursor form (prApe1) that has an amino-terminal propeptide. The N-terminal extension of the 61 kDa precursor is proteolytically processed in two sequential steps. The first step involves proteinase A (PrA/PEP4) and produces a 55 kDa unstable intermediate (iAPI). The second step involves proteinase B (PrB/PRB1) and converts iAPI into the 50 kDa stable, mature enzyme (mApe1).

It localises to the vacuole. The catalysed reaction is Release of an N-terminal amino acid, preferably a neutral or hydrophobic one, from a polypeptide. Aminoacyl-arylamides are poor substrates.. Its activity is regulated as follows. Strongly and specifically activated by Cl(-) and Br(-), which act as positive allosteric effectors. Inactivated by metal-chelating agents. Resident vacuolar enzyme that catalyzes the removal of amino acids from the N-terminus of peptides and proteins. Also acts as the major cargo protein of the cytoplasm-to-vacuole targeting (Cvt) pathway. The precursor form of aminopeptidase 1 (prApe1) assembles into dodecamers and the propeptide mediates the aggregation of dodecamers into higher multimers. The multimers are then recognized via the propeptide by their receptor ATG19, and ATG19 further interacts with ATG11, which tethers the APE1-ATG19 complex to the pre-autophagosomal structure (PAS). The cargo-receptor complex (also Cvt complex) is selectively enwrapped by a double-membrane structure termed the Cvt vesicle under vegetative growth conditions and by a similar but larger double-membrane structure termed the autophagosome under nitrogen starvation conditions. The Cvt vesicle or the autophagosome fuses with the vacuolar membrane and release its content in the vacuolar lumen. In the vacuole, prApe1 is processed into mature aminopeptidase 1 (mApe1). The chain is Vacuolar aminopeptidase 1 from Saccharomyces cerevisiae (strain ATCC 204508 / S288c) (Baker's yeast).